A 315-amino-acid chain; its full sequence is MNYLDFESKIKEIEDKITSLSHVFEDEKTEAEIKKLSKKRFELMESTYSKLTDWQVVQLSRHPDRPYFKDLLPLIFTDFQELHGDRTFGDDLAVIGGLAKLNNKPVMVIGQEKGRDTKSKIKHNFGMMHPEGYRKALRLMKLAEKFNMPVVTFIDTPGAYPGIKAEERGQSEAIARNLLEMSALKVPVVCIVIGEGCSGGALGIGVGDRLLMLQYSYFATISPEGCASILHKTAEKASEVTQMMNITSGRLKELKIVDEVIPEPLGGAHRDYETTATNIRKAVAAELKILSEMTVGQRNSRRYDKLMSFGRFKEA.

Positions 35–289 (KLSKKRFELM…RKAVAAELKI (255 aa)) constitute a CoA carboxyltransferase C-terminal domain.

Belongs to the AccA family. Acetyl-CoA carboxylase is a heterohexamer composed of biotin carboxyl carrier protein (AccB), biotin carboxylase (AccC) and two subunits each of ACCase subunit alpha (AccA) and ACCase subunit beta (AccD).

It is found in the cytoplasm. It catalyses the reaction N(6)-carboxybiotinyl-L-lysyl-[protein] + acetyl-CoA = N(6)-biotinyl-L-lysyl-[protein] + malonyl-CoA. The protein operates within lipid metabolism; malonyl-CoA biosynthesis; malonyl-CoA from acetyl-CoA: step 1/1. Its function is as follows. Component of the acetyl coenzyme A carboxylase (ACC) complex. First, biotin carboxylase catalyzes the carboxylation of biotin on its carrier protein (BCCP) and then the CO(2) group is transferred by the carboxyltransferase to acetyl-CoA to form malonyl-CoA. This chain is Acetyl-coenzyme A carboxylase carboxyl transferase subunit alpha, found in Francisella tularensis subsp. mediasiatica (strain FSC147).